The primary structure comprises 577 residues: 5'-AMP-activated protein kinase subunit gamma (577 aa).

Positions 45–226 (QSEGVGGGEL…NNNNSNSNNN (182 aa)) are disordered. Over residues 58-88 (NNNTTNNNTPTNTTTTTNTNTTTMNNSNNNN) the composition is skewed to low complexity. Polar residues-rich tracts occupy residues 106-121 (SIEQ…SQDG) and 138-155 (ESQS…NNNM). The span at 165 to 226 (STDNKSSTNT…NNNNSNSNNN (62 aa)) shows a compositional bias: low complexity. CBS domains lie at 279 to 341 (VIPI…KKPK), 364 to 426 (ERPS…QLPE), 438 to 499 (IGTF…LSPS), and 517 to 574 (QRPE…DVKS).

The protein belongs to the 5'-AMP-activated protein kinase gamma subunit family.

AMPK may be responsible for the regulation of fatty acid synthesis by phosphorylation of acetyl-CoA carboxylase. In Dictyostelium discoideum (Social amoeba), this protein is 5'-AMP-activated protein kinase subunit gamma (prkag).